The primary structure comprises 622 residues: E3 ubiquitin-protein ligase RNF12-A (622 aa).

3 disordered regions span residues 1–26, 67–386, and 473–514; these read MESA…MDRL, RLQQ…ESER, and NANA…NSRG. The segment covering 11-21 has biased composition (low complexity); the sequence is SIEQSESQRQS. Composition is skewed to polar residues over residues 110–138 and 147–163; these read SVRQ…NPNS and INVN…SLDQ. Basic and acidic residues predominate over residues 216 to 242; sequence RSPDQRRTRARTDRSRSPLHHAVDPPI. The segment covering 247 to 256 has biased composition (polar residues); the sequence is HSSSQTVDTS. Residues 272–289 show a composition bias toward low complexity; that stretch reads SSQVQNSSSSNETEGSSR. Over residues 300-317 the composition is skewed to polar residues; sequence VLGTEGQSQSTVHLSNPE. Residues 318–331 show a composition bias toward low complexity; the sequence is TRSSSQTPQTDSST. Residues 332 to 341 are compositionally biased toward polar residues; the sequence is NAETTGTGQR. Residues 355-365 show a composition bias toward basic and acidic residues; it reads RPGDYRQRDSI. Polar residues predominate over residues 366-382; that stretch reads ANRTRSRSQTPNNTVTY. Residues 568 to 609 form an RING-type; atypical zinc finger; the sequence is CSVCITEYTEGNKLRKLPCSHEYHIHCIDRWLSENSTCPICR. A PDZ-binding motif is present at residues 619–622; sequence ESIV.

The protein belongs to the RNF12 family. Forms homodimers through the C-terminal region. The N-terminus interacts with the homeobox of LIM/homeobox factor lhx1/lim1, with lhx3/lim3 and lhx5/lim5, and with the N-terminus of ldb1. Shows overlapping expression with lhx1/lim1 and ldb1 in the gastrula mesoderm, and expression overlaps with ldb1 throughout early embryogenesis. After gastrulation, expression is gradually restricted to tissues originated from the ectoderm, the neuroectoderm, neural crest and epidermis, and subsequently to the neural tube as well as the head and tailbud region.

The protein localises to the nucleus. The enzyme catalyses S-ubiquitinyl-[E2 ubiquitin-conjugating enzyme]-L-cysteine + [acceptor protein]-L-lysine = [E2 ubiquitin-conjugating enzyme]-L-cysteine + N(6)-ubiquitinyl-[acceptor protein]-L-lysine.. It functions in the pathway protein modification; protein ubiquitination. In terms of biological role, acts as an E3 ubiquitin-protein ligase specific for ldb1, mediating ubiquitination and proteasome-dependent degradation of excess ldb1 in a RING-dependent manner. Does not degrade ldb1 bound to lhx1/lim1, nor lim1 itself and thus contributes to the establishment of proper ldb1-lhx1/lim1 stoichiometry and the formation of a ldb1-lhx1/lim1 complex. Interferes with Spemann organizer function and suppresses secondary axis formation induced by ldb1 and lhx1/lim1. This is E3 ubiquitin-protein ligase RNF12-A (rnf12-a) from Xenopus laevis (African clawed frog).